An 81-amino-acid chain; its full sequence is Small ribosomal subunit protein uS17 (81 aa).

This sequence belongs to the universal ribosomal protein uS17 family. Part of the 30S ribosomal subunit.

In terms of biological role, one of the primary rRNA binding proteins, it binds specifically to the 5'-end of 16S ribosomal RNA. This Methylocella silvestris (strain DSM 15510 / CIP 108128 / LMG 27833 / NCIMB 13906 / BL2) protein is Small ribosomal subunit protein uS17.